Here is a 111-residue protein sequence, read N- to C-terminus: MNAHKERLESNLLELLQEALASLNDSELNSLSVTKVECSKGKHHAYVFVLSSDHKILSKLKKAEGLIRQFVLQASGWFKCPKLSFVSDNSLEKQLRLDAIFNEIAKGKDND.

This sequence belongs to the RbfA family. Monomer. Binds 30S ribosomal subunits, but not 50S ribosomal subunits or 70S ribosomes.

It is found in the cytoplasm. In terms of biological role, one of several proteins that assist in the late maturation steps of the functional core of the 30S ribosomal subunit. Associates with free 30S ribosomal subunits (but not with 30S subunits that are part of 70S ribosomes or polysomes). Required for efficient processing of 16S rRNA. May interact with the 5'-terminal helix region of 16S rRNA. The protein is Ribosome-binding factor A of Helicobacter pylori (strain ATCC 700392 / 26695) (Campylobacter pylori).